Here is a 1400-residue protein sequence, read N- to C-terminus: DNA-directed RNA polymerase subunit beta' (1400 aa).

Positions 71, 73, 86, and 89 each coordinate Zn(2+). Residues D462, D464, and D466 each contribute to the Mg(2+) site. Positions 820, 893, 900, and 903 each coordinate Zn(2+).

Belongs to the RNA polymerase beta' chain family. As to quaternary structure, the RNAP catalytic core consists of 2 alpha, 1 beta, 1 beta' and 1 omega subunit. When a sigma factor is associated with the core the holoenzyme is formed, which can initiate transcription. Requires Mg(2+) as cofactor. Zn(2+) serves as cofactor.

The enzyme catalyses RNA(n) + a ribonucleoside 5'-triphosphate = RNA(n+1) + diphosphate. Its function is as follows. DNA-dependent RNA polymerase catalyzes the transcription of DNA into RNA using the four ribonucleoside triphosphates as substrates. The protein is DNA-directed RNA polymerase subunit beta' of Methylobacterium nodulans (strain LMG 21967 / CNCM I-2342 / ORS 2060).